Consider the following 660-residue polypeptide: Peroxisomal acyl-coenzyme A oxidase 1 (660 aa).

S26 is modified (phosphoserine). K89 and K90 each carry N6-succinyllysine. The FAD site is built by T139 and G178. K216 bears the N6-acetyllysine mark. K241 bears the N6-succinyllysine mark. An N6-acetyllysine mark is found at K255, K267, and K272. K349 carries the N6-succinyllysine modification. E421 (proton acceptor) is an active-site residue. N6-acetyllysine; alternate is present on residues K437 and K446. K437 and K446 each carry N6-succinyllysine; alternate. An N6-acetyllysine mark is found at K500 and K504. K512 is subject to N6-acetyllysine; alternate. K512 is modified (N6-succinyllysine; alternate). K542 carries the post-translational modification N6-succinyllysine. An N6-acetyllysine; alternate modification is found at K637. Position 637 is an N6-succinyllysine; alternate (K637). The residue at position 643 (K643) is an N6-succinyllysine. A Phosphoserine modification is found at S649. K651 is modified (N6-acetyllysine). Position 654 is an N6-succinyllysine (K654). Residues 658–660 carry the Microbody targeting signal motif; it reads SKL.

It belongs to the acyl-CoA oxidase family. Homodimer. Interacts with LONP2. FAD is required as a cofactor. In terms of tissue distribution, widely expressed with highest levels of isoform 1 and isoform 2 detected in testis. Isoform 1 is expressed at higher levels than isoform 2 in liver and kidney while isoform 2 levels are higher in brain, lung, muscle, white adipose tissue and testis. Levels are almost equal in heart.

It is found in the peroxisome. The enzyme catalyses a 2,3-saturated acyl-CoA + O2 = a (2E)-enoyl-CoA + H2O2. It catalyses the reaction hexadecanoyl-CoA + O2 = (2E)-hexadecenoyl-CoA + H2O2. It carries out the reaction dodecanoyl-CoA + O2 = (2E)-dodecenoyl-CoA + H2O2. The catalysed reaction is octanoyl-CoA + O2 = (2E)-octenoyl-CoA + H2O2. The enzyme catalyses decanoyl-CoA + O2 = (2E)-decenoyl-CoA + H2O2. It catalyses the reaction tetradecanoyl-CoA + O2 = (2E)-tetradecenoyl-CoA + H2O2. It carries out the reaction hexadecanedioyl-CoA + O2 = (2E)-hexadecenedioyl-CoA + H2O2. The catalysed reaction is (5Z,8Z,11Z,14Z,17Z)-eicosapentaenoyl-CoA + O2 = (2E,5Z,8Z,11Z,14Z,17Z)-icosahexaenoyl-CoA + H2O2. The enzyme catalyses tetracosanoyl-CoA + O2 = (2E)-tetracosenoyl-CoA + H2O2. It catalyses the reaction glutaryl-CoA + O2 = (2E)-glutaconyl-CoA + H2O2. It carries out the reaction hexanoyl-CoA + O2 = (2E)-hexenoyl-CoA + H2O2. The catalysed reaction is octadecanoyl-CoA + O2 = (2E)-octadecenoyl-CoA + H2O2. The enzyme catalyses (6Z,9Z,12Z,15Z,18Z,21Z)-tetracosahexaenoyl-CoA + O2 = (2E,6Z,9Z,12Z,15Z,18Z,21Z)-tetracosaheptaenoyl-CoA + H2O2. It participates in lipid metabolism; peroxisomal fatty acid beta-oxidation. Involved in the initial and rate-limiting step of peroxisomal beta-oxidation of straight-chain saturated and unsaturated very-long-chain fatty acids. Catalyzes the desaturation of fatty acyl-CoAs such as palmitoyl-CoA (hexadecanoyl-CoA) to 2-trans-enoyl-CoAs ((2E)-enoyl-CoAs) such as (2E)-hexadecenoyl-CoA, and donates electrons directly to molecular oxygen (O(2)), thereby producing hydrogen peroxide (H(2)O(2)). Its function is as follows. Shows highest activity against medium-chain fatty acyl-CoAs. Shows optimum activity with a chain length of 10 carbons (decanoyl-CoA) in vitro. Functionally, is active against a much broader range of substrates and shows activity towards long-chain fatty acyl-CoAs. The sequence is that of Peroxisomal acyl-coenzyme A oxidase 1 from Homo sapiens (Human).